Reading from the N-terminus, the 341-residue chain is Ribonucleoside-diphosphate reductase small chain A (341 aa).

The disordered stretch occupies residues 1–20; that stretch reads MGSLKEGQGRDMEEGESEEP. 3 residues coordinate Fe cation: aspartate 87, glutamate 118, and histidine 121. The active site involves tyrosine 125. 3 residues coordinate Fe cation: glutamate 180, glutamate 214, and histidine 217.

Belongs to the ribonucleoside diphosphate reductase small chain family. As to quaternary structure, homodimer and heterodimer with TSO2. Heterotetramer of two R1 and two R2 chains. A radical transfer pathway may occur between Tyr-125 of protein R2 and R1. Homodimer contains a dinuclear non-heme iron center and a stable tyrosyl radical essential for activity. A transfer pathway may occur between Tyr-125 of protein R2 and R1. Interacts with CSN7. Fe cation serves as cofactor. In terms of tissue distribution, expressed in rosette leaves, cauline leaves, stems and flowers.

It localises to the cytoplasm. It carries out the reaction a 2'-deoxyribonucleoside 5'-diphosphate + [thioredoxin]-disulfide + H2O = a ribonucleoside 5'-diphosphate + [thioredoxin]-dithiol. Its activity is regulated as follows. Inhibited by phenol, paracetamol, 2,4,6-trimethylphenol, resveratrol, furfuryl mercaptan, 2-thiophenthiol, phenylhydrazine, and hydroxyurea. Its function is as follows. Provides the precursors necessary for DNA synthesis. Catalyzes the biosynthesis of deoxyribonucleotides from the corresponding ribonucleotides. The protein is Ribonucleoside-diphosphate reductase small chain A (RNR2A) of Arabidopsis thaliana (Mouse-ear cress).